A 476-amino-acid chain; its full sequence is Cysteine--tRNA ligase (476 aa).

Cys-30 is a Zn(2+) binding site. The 'HIGH' region signature appears at 32–42 (PTVYNYIHIGN). Zn(2+) is bound by residues Cys-215, His-240, and Glu-244. The short motif at 274–278 (KMSKS) is the 'KMSKS' region element. Residue Lys-277 participates in ATP binding.

This sequence belongs to the class-I aminoacyl-tRNA synthetase family. In terms of assembly, monomer. Zn(2+) is required as a cofactor.

Its subcellular location is the cytoplasm. It catalyses the reaction tRNA(Cys) + L-cysteine + ATP = L-cysteinyl-tRNA(Cys) + AMP + diphosphate. The protein is Cysteine--tRNA ligase of Lactobacillus helveticus (strain DPC 4571).